A 571-amino-acid chain; its full sequence is Fumarate reductase (cytochrome) (571 aa).

Residues histidine 8, cysteine 14, cysteine 17, histidine 18, cysteine 36, cysteine 39, histidine 40, histidine 52, histidine 58, histidine 61, cysteine 68, cysteine 71, histidine 72, alanine 74, histidine 75, cysteine 82, cysteine 85, histidine 86, asparagine 91, and tyrosine 94 each coordinate heme c. A flavoprotein-like region spans residues 118-571; it reads ALASAPHDTV…EEAAKYSKKN (454 aa). FAD is bound by residues alanine 137, glutamate 156, asparagine 164, alanine 165, alanine 169, glycine 170, glycine 171, glycine 278, and glutamine 338. A succinate-binding site is contributed by glycine 170. Succinate is bound by residues histidine 365, threonine 377, and glutamate 378. Positions 377, 378, and 402 each coordinate fumarate. Catalysis depends on arginine 402, which acts as the Proton donor. Lysine 431 is a heme c binding site. Succinate is bound at residue histidine 504. Histidine 504 contributes to the fumarate binding site. FAD is bound by residues histidine 505 and glutamate 534. The succinate site is built by arginine 544 and glycine 547. Residues arginine 544 and glycine 547 each coordinate fumarate. Positions 549 and 550 each coordinate FAD.

Monomer. FAD is required as a cofactor. Requires heme c as cofactor.

The protein resides in the periplasm. The enzyme catalyses 2 Fe(III)-[cytochrome c] + succinate = fumarate + 2 Fe(II)-[cytochrome c] + 2 H(+). In terms of biological role, flavocytochrome that catalyzes the reduction of fumarate to succinate. Is essential for fumarate respiration during anaerobic growth, acting as the terminal reductase. Receives electrons from the membrane-bound tetraheme c-type cytochrome CymA. In vitro, can use the artificial electron donor methyl viologen. In Shewanella frigidimarina, this protein is Fumarate reductase (cytochrome) (fccA).